The primary structure comprises 281 residues: Nucleotide-binding protein DNO_0399 (281 aa).

6–13 (GMSGAGKS) lines the ATP pocket. GTP is bound at residue 55–58 (DARN).

The protein belongs to the RapZ-like family.

In terms of biological role, displays ATPase and GTPase activities. This Dichelobacter nodosus (strain VCS1703A) protein is Nucleotide-binding protein DNO_0399.